Consider the following 481-residue polypeptide: Protein FAM83E (481 aa).

The DUF1669 stretch occupies residues 1–296 (MAASQLAALE…LYAASRPLSA (296 aa)). Residues 351-481 (KQETPTTTGP…ASGSGSGRRR (131 aa)) form a disordered region. The span at 371-385 (RTRTTSGPPTRPSRS) shows a compositional bias: low complexity. Polar residues-rich tracts occupy residues 391-400 (RLSQLSGSSD) and 465-474 (NATTSDWASG).

This sequence belongs to the FAM83 family. In terms of assembly, directly interacts (via DUF1669) with CSNK1A1, CSNK1A1L, CSNK1D and CSNK1E. May interact with RAF1.

It localises to the cytoplasm. Its subcellular location is the perinuclear region. In terms of biological role, may play a role in MAPK signaling. This Mus musculus (Mouse) protein is Protein FAM83E.